Reading from the N-terminus, the 526-residue chain is Chaperonin GroEL, chloroplastic (526 aa).

Residues 29 to 32, 86 to 90, G412, 476 to 478, and D492 contribute to the ATP site; these read TLGP, DGTTT, and DAA.

This sequence belongs to the chaperonin (HSP60) family. As to quaternary structure, forms a cylinder of 14 subunits composed of two heptameric rings stacked back-to-back. Interacts with the co-chaperonin GroES.

Its subcellular location is the plastid. It is found in the chloroplast. The enzyme catalyses ATP + H2O + a folded polypeptide = ADP + phosphate + an unfolded polypeptide.. Functionally, together with its co-chaperonin GroES, plays an essential role in assisting protein folding. The GroEL-GroES system forms a nano-cage that allows encapsulation of the non-native substrate proteins and provides a physical environment optimized to promote and accelerate protein folding. The protein is Chaperonin GroEL, chloroplastic of Cyanidioschyzon merolae (strain NIES-3377 / 10D) (Unicellular red alga).